The sequence spans 250 residues: Uracil-DNA glycosylase (250 aa).

Asp-78 (proton acceptor) is an active-site residue. Positions 228 to 250 (RGQKPVDWSGEQNNASRQGEFAL) are disordered.

It belongs to the uracil-DNA glycosylase (UDG) superfamily. UNG family.

The protein localises to the cytoplasm. It catalyses the reaction Hydrolyzes single-stranded DNA or mismatched double-stranded DNA and polynucleotides, releasing free uracil.. Functionally, excises uracil residues from the DNA which can arise as a result of misincorporation of dUMP residues by DNA polymerase or due to deamination of cytosine. The sequence is that of Uracil-DNA glycosylase from Bordetella parapertussis (strain 12822 / ATCC BAA-587 / NCTC 13253).